Here is a 295-residue protein sequence, read N- to C-terminus: UDP-3-O-acyl-N-acetylglucosamine deacetylase (295 aa).

Residues His-75, His-232, and Asp-236 each contribute to the Zn(2+) site. His-259 serves as the catalytic Proton donor.

The protein belongs to the LpxC family. It depends on Zn(2+) as a cofactor.

It catalyses the reaction a UDP-3-O-[(3R)-3-hydroxyacyl]-N-acetyl-alpha-D-glucosamine + H2O = a UDP-3-O-[(3R)-3-hydroxyacyl]-alpha-D-glucosamine + acetate. Its pathway is glycolipid biosynthesis; lipid IV(A) biosynthesis; lipid IV(A) from (3R)-3-hydroxytetradecanoyl-[acyl-carrier-protein] and UDP-N-acetyl-alpha-D-glucosamine: step 2/6. Catalyzes the hydrolysis of UDP-3-O-myristoyl-N-acetylglucosamine to form UDP-3-O-myristoylglucosamine and acetate, the committed step in lipid A biosynthesis. The protein is UDP-3-O-acyl-N-acetylglucosamine deacetylase of Helicobacter pylori (strain ATCC 700392 / 26695) (Campylobacter pylori).